Here is a 1723-residue protein sequence, read N- to C-terminus: Lys-gingipain (1723 aa).

Positions 1 to 24 are cleaved as a signal peptide; it reads MRKLLLLIAASLLGVGLYAQSAKI. A propeptide spanning residues 25 to 228 is cleaved from the precursor; sequence KLDAPTTRTT…ETAYKQLFNR (204 aa). Ca(2+) is bound by residues Asp-313, Asp-337, Asp-339, Phe-341, and Glu-343. Residue His-444 is the Proton donor of the active site. Residue Cys-477 is the Nucleophile of the active site. 2 residues coordinate Ca(2+): Phe-482 and Glu-491. A disordered region spans residues 964 to 985; the sequence is WDAPNGTPNPNPNPNPGTTTLS. 20 residues coordinate Ca(2+): Ser-987, Glu-989, Asp-1000, Asp-1002, Asp-1004, His-1006, Ser-1021, Gly-1023, Asn-1042, Asp-1145, Glu-1146, Asp-1430, Glu-1432, Asp-1444, Asp-1446, Asp-1448, Asn-1450, Ser-1480, Asn-1495, and Asp-1585.

This sequence belongs to the peptidase C25 family. Post-translationally, proteolytically cleaved into a catalytic subunit and three adhesins. Arg-gingipain is involved in this post-translational processing.

It is found in the secreted. The enzyme catalyses Endopeptidase with strict specificity for lysyl bonds.. Its activity is regulated as follows. Activated by the thiol-reducing agents cysteine, 2-mercaptoethanol and dithiothreitol. Inhibited by iodacetamide, iodoacetic acid, leupeptin, tosyl-L-lysine and tosyl-L-phenylalanine. Not inhibited by elastatinal, chymostatin, cystatins, alpha1-antichymotrypsin or the serine protease inhibitors phenylmethylsulfonyl fluoride and diisopropylfluorophosphate. Not inhibited by metal ion chelators. Inhibited by the heavy metal ions Fe(3+), Zn(2+), Cu(2+) and Mn(2+). In terms of biological role, cysteine proteinase with a strong preference for substrates with Lys in the P1 position. Hydrolyzes bovine hemoglobin, bovine serum albumin, casein, human placental type I collagen and human IgA and IgG. Disrupts the functions of polymorphonuclear leukocytes. May act as a virulence factor in the development of peridontal disease. Involved in the coaggregation of P.gingivalis with other oral bacteria. In Porphyromonas gingivalis (strain ATCC 33277 / DSM 20709 / CIP 103683 / JCM 12257 / NCTC 11834 / 2561), this protein is Lys-gingipain.